Reading from the N-terminus, the 401-residue chain is Aspartate aminotransferase, mitochondrial (401 aa).

Thr-19 carries the post-translational modification Phosphothreonine. Lys-30 carries the N6-acetyllysine modification. Residue Gly-36 coordinates substrate. Lys-44 bears the N6-acetyllysine; alternate mark. Residue Lys-44 is modified to N6-succinyllysine; alternate. The residue at position 53 (Lys-53) is an N6-acetyllysine. N6-acetyllysine; alternate is present on Lys-61. The residue at position 61 (Lys-61) is an N6-succinyllysine; alternate. Tyr-67 bears the 3'-nitrotyrosine; alternate mark. The residue at position 67 (Tyr-67) is a Phosphotyrosine; alternate. An N6-acetyllysine; alternate mark is found at Lys-78, Lys-93, and Lys-130. N6-succinyllysine; alternate is present on residues Lys-78, Lys-93, and Lys-130. Trp-133 contributes to the substrate binding site. Lys-156 bears the N6-acetyllysine; alternate mark. N6-succinyllysine; alternate is present on Lys-156. Asn-186 serves as a coordination point for substrate. An N6-succinyllysine modification is found at Lys-198. Lys-205 bears the N6-acetyllysine mark. 2 positions are modified to N6-acetyllysine; alternate: Lys-250 and Lys-267. Residue Lys-250 is modified to N6-(pyridoxal phosphate)lysine; alternate. Residue Lys-267 is modified to N6-succinyllysine; alternate. Position 273 is an N6-acetyllysine (Lys-273). Lys-280 carries the post-translational modification N6-acetyllysine; alternate. Position 280 is an N6-succinyllysine; alternate (Lys-280). At Arg-284 the chain carries Asymmetric dimethylarginine. Lys-309 bears the N6-acetyllysine; alternate mark. Lys-309 is subject to N6-succinyllysine; alternate. Lys-316 carries the post-translational modification N6-acetyllysine. Lys-334 carries the post-translational modification N6-acetyllysine; alternate. Lys-334 bears the N6-succinyllysine; alternate mark. Residues Lys-335 and Lys-358 each carry the N6-acetyllysine modification. Lys-367 and Lys-375 each carry N6-acetyllysine; alternate. Residues Lys-367 and Lys-375 each carry the N6-succinyllysine; alternate modification. Substrate is bound at residue Arg-378.

Belongs to the class-I pyridoxal-phosphate-dependent aminotransferase family. In terms of assembly, homodimer. Requires pyridoxal 5'-phosphate as cofactor.

It localises to the mitochondrion matrix. The protein resides in the cell membrane. It carries out the reaction L-aspartate + 2-oxoglutarate = oxaloacetate + L-glutamate. It catalyses the reaction L-kynurenine + 2-oxoglutarate = kynurenate + L-glutamate + H2O. Functionally, catalyzes the irreversible transamination of the L-tryptophan metabolite L-kynurenine to form kynurenic acid (KA). As a member of the malate-aspartate shuttle, it has a key role in the intracellular NAD(H) redox balance. Is important for metabolite exchange between mitochondria and cytosol, and for amino acid metabolism. Facilitates cellular uptake of long-chain free fatty acids. In Equus caballus (Horse), this protein is Aspartate aminotransferase, mitochondrial (GOT2).